The following is a 501-amino-acid chain: Calcium-dependent protein kinase 4 (501 aa).

A Protein kinase domain is found at Y25 to I283. ATP-binding positions include L31–T39 and K54. The Proton acceptor role is filled by D149. S189 carries the post-translational modification Phosphoserine. Residues A289 to I319 are autoinhibitory domain. 4 EF-hand domains span residues E326–E361, L362–M397, E398–C433, and L437–V467. Ca(2+) contacts are provided by D339, D341, S343, T345, E350, D375, D377, S379, T381, E386, D411, D413, S415, Y417, E422, D445, D447, D449, K451, and E456.

The protein belongs to the protein kinase superfamily. Ser/Thr protein kinase family. CDPK subfamily. As to quaternary structure, interacts with Di19.

It is found in the cytoplasm. The protein resides in the nucleus. The enzyme catalyses L-seryl-[protein] + ATP = O-phospho-L-seryl-[protein] + ADP + H(+). The catalysed reaction is L-threonyl-[protein] + ATP = O-phospho-L-threonyl-[protein] + ADP + H(+). Its activity is regulated as follows. Activated by calcium. Autophosphorylation may play an important role in the regulation of the kinase activity. Its function is as follows. May play a role in signal transduction pathways that involve calcium as a second messenger. Functions as a regulator of the calcium-mediated abscisic acid (ABA) signaling pathway. Phosphorylates ABA-responsive transcription factors ABF1 and ABF4 in vitro. Phosphorylates the nuclear zinc finger Di19 in vitro. This chain is Calcium-dependent protein kinase 4 (CPK4), found in Arabidopsis thaliana (Mouse-ear cress).